A 246-amino-acid chain; its full sequence is Probable phosphatase PBPRB2022 (246 aa).

Residues histidine 8, histidine 10, histidine 16, histidine 41, glutamate 74, histidine 102, histidine 132, aspartate 193, and histidine 195 each contribute to the Zn(2+) site.

This sequence belongs to the PHP family. It depends on Zn(2+) as a cofactor.

In Photobacterium profundum (strain SS9), this protein is Probable phosphatase PBPRB2022.